Here is a 392-residue protein sequence, read N- to C-terminus: tRNA-specific 2-thiouridylase MnmA (392 aa).

Residues 18-25 (GMSGGVDS) and Met44 each bind ATP. Positions 104–106 (NPD) are interaction with target base in tRNA. Residue Cys109 is the Nucleophile of the active site. Cys109 and Cys208 are disulfide-bonded. ATP is bound at residue Gly133. Residues 158–160 (KDQ) are interaction with tRNA. Cys208 acts as the Cysteine persulfide intermediate in catalysis. An interaction with tRNA region spans residues 320–321 (RY).

This sequence belongs to the MnmA/TRMU family.

It localises to the cytoplasm. It catalyses the reaction S-sulfanyl-L-cysteinyl-[protein] + uridine(34) in tRNA + AH2 + ATP = 2-thiouridine(34) in tRNA + L-cysteinyl-[protein] + A + AMP + diphosphate + H(+). Functionally, catalyzes the 2-thiolation of uridine at the wobble position (U34) of tRNA, leading to the formation of s(2)U34. This is tRNA-specific 2-thiouridylase MnmA from Marinobacter nauticus (strain ATCC 700491 / DSM 11845 / VT8) (Marinobacter aquaeolei).